Here is a 155-residue protein sequence, read N- to C-terminus: uncharacterized protein (155 aa).

Disordered stretches follow at residues 24 to 63 (RVGYKEGPTVETKKIQPQLPDEDGNHSDKEDEQPQVVVLK) and 80 to 155 (KAAK…DENE). S50 bears the Phosphoserine mark. At K108 the chain carries N6-acetyllysine. Polar residues predominate over residues 128-147 (KQSSVRKNSQKQIKNSSLLS). Phosphoserine is present on residues S130, S147, and S150.

This is an uncharacterized protein from Mus musculus (Mouse).